The sequence spans 971 residues: Isoleucine--tRNA ligase (971 aa).

Positions 64–74 (PYANGHIHIGH) match the 'HIGH' region motif. An L-isoleucyl-5'-AMP-binding site is contributed by glutamate 602. The 'KMSKS' region signature appears at 643-647 (KMSKS). Lysine 646 contacts ATP.

This sequence belongs to the class-I aminoacyl-tRNA synthetase family. IleS type 1 subfamily. As to quaternary structure, monomer.

The protein localises to the cytoplasm. The enzyme catalyses tRNA(Ile) + L-isoleucine + ATP = L-isoleucyl-tRNA(Ile) + AMP + diphosphate. In terms of biological role, catalyzes the attachment of isoleucine to tRNA(Ile). As IleRS can inadvertently accommodate and process structurally similar amino acids such as valine, to avoid such errors it has two additional distinct tRNA(Ile)-dependent editing activities. One activity is designated as 'pretransfer' editing and involves the hydrolysis of activated Val-AMP. The other activity is designated 'posttransfer' editing and involves deacylation of mischarged Val-tRNA(Ile). The chain is Isoleucine--tRNA ligase from Bartonella henselae (strain ATCC 49882 / DSM 28221 / CCUG 30454 / Houston 1) (Rochalimaea henselae).